Reading from the N-terminus, the 465-residue chain is Kynurenine 3-monooxygenase (465 aa).

The disordered stretch occupies residues 1–26; it reads MSPGIVSQEVNGRQEPTEAARDERHG. Positions 15–25 are enriched in basic and acidic residues; that stretch reads EPTEAARDERH. 2 consecutive transmembrane segments (helical) span residues 405–427 and 440–462; these read LLFRLFPGWIPLYNSVSFSSMPY and LLKRIFGATFLAAIVTGGAIYAQ.

The protein belongs to the aromatic-ring hydroxylase family. KMO subfamily. Requires FAD as cofactor.

The protein resides in the mitochondrion. The protein localises to the membrane. The catalysed reaction is L-kynurenine + NADPH + O2 + H(+) = 3-hydroxy-L-kynurenine + NADP(+) + H2O. Its pathway is cofactor biosynthesis; NAD(+) biosynthesis; quinolinate from L-kynurenine: step 1/3. Functionally, catalyzes the hydroxylation of L-kynurenine (L-Kyn) to form 3-hydroxy-L-kynurenine (L-3OHKyn). Required for synthesis of quinolinic acid. The polypeptide is Kynurenine 3-monooxygenase (Drosophila melanogaster (Fruit fly)).